The sequence spans 971 residues: Oncostatin-M-specific receptor subunit beta (971 aa).

An N-terminal signal peptide occupies residues 1-23 (MAFSVVLHPAFLLAVLSLRASRS). The Extracellular portion of the chain corresponds to 24 to 737 (EVLEEPLPLT…VTTPDARSHM (714 aa)). N-linked (GlcNAc...) asparagine glycosylation is found at asparagine 74, asparagine 97, asparagine 130, asparagine 162, and asparagine 239. A disulfide bridge connects residues cysteine 242 and cysteine 252. Asparagine 271, asparagine 304, asparagine 323, and asparagine 377 each carry an N-linked (GlcNAc...) asparagine glycan. Fibronectin type-III domains follow at residues 332 to 425 (APQD…TPET), 427 to 523 (PSQA…SNDS), 524 to 620 (GHEE…TQEL), and 622 to 733 (PLVN…TPDA). A WSXWS motif motif is present at residues 412–416 (WSDWT). N-linked (GlcNAc...) asparagine glycosylation is found at asparagine 491, asparagine 541, asparagine 577, asparagine 689, and asparagine 722. A helical membrane pass occupies residues 738–758 (LLQIILPMTLCVLLSIIVCYW). Residues 759–971 (KSQWVKEKCY…STVLLGQGEQ (213 aa)) are Cytoplasmic-facing. The Box 1 motif motif lies at 767–775 (CYPDIPNPY). Positions 949–971 (LASPSLKEDNSLTSTVLLGQGEQ) are disordered. Over residues 959 to 971 (SLTSTVLLGQGEQ) the composition is skewed to polar residues.

This sequence belongs to the type I cytokine receptor family. Type 2 subfamily. In terms of assembly, heterodimer composed of OSMR and IL6ST (type II OSM receptor). Heterodimer with IL31RA to form the IL31 receptor. As to expression, widely expressed. Expressed at highest levels in the lung, heart, thymus and spleen. Expressed in dorsal root ganglia.

It localises to the membrane. Its function is as follows. Associates with IL31RA to form the IL31 receptor. Binds IL31 to activate STAT3 and possibly STAT1 and STAT5. Capable of transducing OSM-specific signaling events. In Mus musculus (Mouse), this protein is Oncostatin-M-specific receptor subunit beta (Osmr).